Here is a 465-residue protein sequence, read N- to C-terminus: Kynureninase (465 aa).

Pyridoxal 5'-phosphate contacts are provided by residues Leu-116, Thr-117, 144–147 (FPSD), Asp-231, His-234, and Tyr-256. Position 257 is an N6-(pyridoxal phosphate)lysine (Lys-257). 2 residues coordinate pyridoxal 5'-phosphate: Trp-291 and Asn-319.

This sequence belongs to the kynureninase family. In terms of assembly, homodimer. Requires pyridoxal 5'-phosphate as cofactor.

The protein resides in the cytoplasm. It carries out the reaction L-kynurenine + H2O = anthranilate + L-alanine + H(+). The catalysed reaction is 3-hydroxy-L-kynurenine + H2O = 3-hydroxyanthranilate + L-alanine + H(+). It participates in amino-acid degradation; L-kynurenine degradation; L-alanine and anthranilate from L-kynurenine: step 1/1. It functions in the pathway cofactor biosynthesis; NAD(+) biosynthesis; quinolinate from L-kynurenine: step 2/3. Catalyzes the cleavage of L-kynurenine (L-Kyn) and L-3-hydroxykynurenine (L-3OHKyn) into anthranilic acid (AA) and 3-hydroxyanthranilic acid (3-OHAA), respectively. This is Kynureninase from Scheffersomyces stipitis (strain ATCC 58785 / CBS 6054 / NBRC 10063 / NRRL Y-11545) (Yeast).